The chain runs to 216 residues: N-acetyltransferase 9-like protein (216 aa).

Residues 68-215 form the N-acetyltransferase domain; that stretch reads VLLNENDEAK…DHVELELMRT (148 aa).

Belongs to the acetyltransferase family. GNAT subfamily.

Its subcellular location is the cytoplasm. The protein localises to the nucleus. The sequence is that of N-acetyltransferase 9-like protein from Schizosaccharomyces pombe (strain 972 / ATCC 24843) (Fission yeast).